Consider the following 256-residue polypeptide: Ubiquinone/menaquinone biosynthesis C-methyltransferase UbiE (256 aa).

S-adenosyl-L-methionine contacts are provided by residues Thr79, Asp100, and 128-129; that span reads DA.

This sequence belongs to the class I-like SAM-binding methyltransferase superfamily. MenG/UbiE family.

It catalyses the reaction a 2-demethylmenaquinol + S-adenosyl-L-methionine = a menaquinol + S-adenosyl-L-homocysteine + H(+). The enzyme catalyses a 2-methoxy-6-(all-trans-polyprenyl)benzene-1,4-diol + S-adenosyl-L-methionine = a 5-methoxy-2-methyl-3-(all-trans-polyprenyl)benzene-1,4-diol + S-adenosyl-L-homocysteine + H(+). It participates in quinol/quinone metabolism; menaquinone biosynthesis; menaquinol from 1,4-dihydroxy-2-naphthoate: step 2/2. The protein operates within cofactor biosynthesis; ubiquinone biosynthesis. In terms of biological role, methyltransferase required for the conversion of demethylmenaquinol (DMKH2) to menaquinol (MKH2) and the conversion of 2-polyprenyl-6-methoxy-1,4-benzoquinol (DDMQH2) to 2-polyprenyl-3-methyl-6-methoxy-1,4-benzoquinol (DMQH2). This Pseudomonas aeruginosa (strain LESB58) protein is Ubiquinone/menaquinone biosynthesis C-methyltransferase UbiE.